Reading from the N-terminus, the 100-residue chain is Large ribosomal subunit protein uL23 (100 aa).

The protein belongs to the universal ribosomal protein uL23 family. In terms of assembly, part of the 50S ribosomal subunit. Contacts protein L29, and trigger factor when it is bound to the ribosome.

Its function is as follows. One of the early assembly proteins it binds 23S rRNA. One of the proteins that surrounds the polypeptide exit tunnel on the outside of the ribosome. Forms the main docking site for trigger factor binding to the ribosome. In Synechococcus sp. (strain WH7803), this protein is Large ribosomal subunit protein uL23.